The sequence spans 184 residues: Ribosome-recycling factor (184 aa).

The protein belongs to the RRF family.

Its subcellular location is the cytoplasm. In terms of biological role, responsible for the release of ribosomes from messenger RNA at the termination of protein biosynthesis. May increase the efficiency of translation by recycling ribosomes from one round of translation to another. This Natranaerobius thermophilus (strain ATCC BAA-1301 / DSM 18059 / JW/NM-WN-LF) protein is Ribosome-recycling factor.